The sequence spans 151 residues: Regulatory protein RecX (151 aa).

It belongs to the RecX family.

The protein localises to the cytoplasm. Functionally, modulates RecA activity. The sequence is that of Regulatory protein RecX from Herminiimonas arsenicoxydans.